A 230-amino-acid chain; its full sequence is Ion-translocating oxidoreductase complex subunit E (230 aa).

Helical transmembrane passes span 18–38 (ALVQ…ATNA), 39–59 (LGLG…ISTL), 63–83 (TPTE…VSAV), 86–106 (LINA…PLIV), 128–148 (ALDG…LGAM), and 182–202 (PFLL…MLAG).

This sequence belongs to the NqrDE/RnfAE family. The complex is composed of six subunits: RsxA, RsxB, RsxC, RsxD, RsxE and RsxG.

The protein localises to the cell inner membrane. Functionally, part of a membrane-bound complex that couples electron transfer with translocation of ions across the membrane. Required to maintain the reduced state of SoxR. The protein is Ion-translocating oxidoreductase complex subunit E of Escherichia fergusonii (strain ATCC 35469 / DSM 13698 / CCUG 18766 / IAM 14443 / JCM 21226 / LMG 7866 / NBRC 102419 / NCTC 12128 / CDC 0568-73).